The following is a 220-amino-acid chain: Exodeoxyribonuclease 10 (220 aa).

Mg(2+) serves as cofactor.

Capable of degrading both single-strand and double-strand DNA with 3' to 5' polarity. Has higher affinity for ssDNA ends than for dsDNA. This chain is Exodeoxyribonuclease 10 (exoX), found in Escherichia coli O6:H1 (strain CFT073 / ATCC 700928 / UPEC).